We begin with the raw amino-acid sequence, 606 residues long: Acetylcholinesterase (606 aa).

Positions 1 to 28 are cleaved as a signal peptide; that stretch reads MPSCQPGKMPAPWPWWLQLLLCIPSCVA. Cysteines 98 and 125 form a disulfide. Serine 231 acts as the Acyl-ester intermediate in catalysis. The cysteines at positions 285 and 296 are disulfide-linked. A glycan (N-linked (GlcNAc...) asparagine) is linked at asparagine 289. Residue glutamate 358 is the Charge relay system of the active site. Asparagine 374 carries an N-linked (GlcNAc...) asparagine glycan. Cysteine 433 and cysteine 552 form a disulfide bridge. Histidine 471 serves as the catalytic Charge relay system. The N-linked (GlcNAc...) asparagine glycan is linked to asparagine 484.

It belongs to the type-B carboxylesterase/lipase family. Isoform S is monomeric. Isoform T can form oligomers, including collagen-tailed forms. In terms of processing, the N-terminus is blocked. As to expression, liver and muscle contain both isoform T and isoform S. Venom gland predominantly contains isoform S.

It localises to the synapse. It is found in the secreted. The protein localises to the cell membrane. The enzyme catalyses acetylcholine + H2O = choline + acetate + H(+). With respect to regulation, inhibited by active site inhibitors: edrophonium, trimethyl-(m-acetamidopheny1)-ammonium iodide, and trimethyl-(p-acetarnidopheny1)-ammonium iodide. Inhibited by both active and peripheral site inhibitors: decamethonium, and BW284c51. Inhibited by peripheral site inhibitors: snake acetylcholinesterase fasciculin-2, propidium, gallamine, D-tubocurarine, and tacrine. Also inhibited by antibodies Elec410 and Fab410. Its function is as follows. In muscle, it terminates signal transduction at the neuromuscular junction by rapid hydrolysis of the acetylcholine released into the synaptic cleft. In liver, its function is unclear: it could serve as a safeguard against any diffusion of acetylcholine from synapses into the circulation. In venom, its toxic role is unclear: it could result in less musculatory control by rapidly hydrolyzing acetylcholine, or that it works synergistically with alkaline phosphatase (ALP) in paralyzing prey through hypotension. The sequence is that of Acetylcholinesterase (ACHE) from Bungarus fasciatus (Banded krait).